The primary structure comprises 938 residues: Isoleucine--tRNA ligase (938 aa).

The 'HIGH' region motif lies at proline 58 to histidine 68. Glutamate 561 is an L-isoleucyl-5'-AMP binding site. Residues lysine 602–serine 606 carry the 'KMSKS' region motif. Lysine 605 serves as a coordination point for ATP. Zn(2+) contacts are provided by cysteine 901, cysteine 904, cysteine 921, and cysteine 924.

The protein belongs to the class-I aminoacyl-tRNA synthetase family. IleS type 1 subfamily. As to quaternary structure, monomer. Zn(2+) is required as a cofactor.

It is found in the cytoplasm. The enzyme catalyses tRNA(Ile) + L-isoleucine + ATP = L-isoleucyl-tRNA(Ile) + AMP + diphosphate. Functionally, catalyzes the attachment of isoleucine to tRNA(Ile). As IleRS can inadvertently accommodate and process structurally similar amino acids such as valine, to avoid such errors it has two additional distinct tRNA(Ile)-dependent editing activities. One activity is designated as 'pretransfer' editing and involves the hydrolysis of activated Val-AMP. The other activity is designated 'posttransfer' editing and involves deacylation of mischarged Val-tRNA(Ile). In Klebsiella pneumoniae (strain 342), this protein is Isoleucine--tRNA ligase.